We begin with the raw amino-acid sequence, 496 residues long: Transmembrane protein 104 (496 aa).

Residues 1–10 (MAGEITETGE) are Cytoplasmic-facing. Residues 11–31 (LYSSYVGLVYMFNLIVGTGAL) form a helical membrane-spanning segment. Topologically, residues 32 to 36 (TMPKA) are extracellular. A helical membrane pass occupies residues 37-57 (FATAGWLVSLVLLVFLGFMSF). At 58 to 146 (VTTTFVIEAM…SMFFNKVGVN (89 aa)) the chain is on the cytoplasmic side. Residues 147-167 (LFYFCIIVYLYGDLAIYAAAV) traverse the membrane as a helical segment. At 168-204 (PFSLMQVTCSATGNDSCGVEADTKYNDTDRCWGPLRR) the chain is on the extracellular side. The N-linked (GlcNAc...) asparagine glycan is linked to Asn193. The chain crosses the membrane as a helical span at residues 205–225 (VDAYRIYLAIFTLLLGPFTFF). Over 226–233 (DVQKTKYL) the chain is Cytoplasmic. A helical transmembrane segment spans residues 234 to 254 (QILTSLMRWIAFAVMIVLALI). Over 255-276 (RIGHGQGEGHPPLADFSGVRNL) the chain is Extracellular. Residues 277 to 297 (FGVCVYSFMCQHSLPSLITPV) traverse the membrane as a helical segment. Residues 298–306 (SSKRHLTRL) lie on the Cytoplasmic side of the membrane. A helical membrane pass occupies residues 307–327 (VFLDYVLILAFYGLLSFTAIF). Topologically, residues 328–354 (CFRGDSLMDMYTLNFARCDVVGLAAVR) are extracellular. Residues 355 to 375 (FFLGLFPVFTISTNFPIIAVT) traverse the membrane as a helical segment. The Cytoplasmic segment spans residues 376–397 (LRNNWKTLFHREGGTYPWVVDR). A helical membrane pass occupies residues 398–418 (VVFPTITLVPPVLVAFCTHDL). The Extracellular portion of the chain corresponds to 419-421 (ESL). Residues 422-442 (VGITGAYAGTGIQYVIPAFLV) form a helical membrane-spanning segment. The Cytoplasmic portion of the chain corresponds to 443–470 (YHCRRDTQLAFGCGVSNKHRSPFRHTFW). Residues 471-491 (VGFVLLWAFSCFIFVTANIIL) form a helical membrane-spanning segment. Residues 492-496 (SETKL) lie on the Extracellular side of the membrane.

This sequence belongs to the TMEM104 family.

The protein localises to the membrane. The protein is Transmembrane protein 104 (TMEM104) of Homo sapiens (Human).